Reading from the N-terminus, the 306-residue chain is 4-hydroxy-tetrahydrodipicolinate synthase (306 aa).

Thr46 provides a ligand contact to pyruvate. Catalysis depends on Tyr134, which acts as the Proton donor/acceptor. The active-site Schiff-base intermediate with substrate is the Lys162. Position 204 (Val204) interacts with pyruvate.

This sequence belongs to the DapA family. As to quaternary structure, homotetramer; dimer of dimers.

The protein localises to the cytoplasm. The catalysed reaction is L-aspartate 4-semialdehyde + pyruvate = (2S,4S)-4-hydroxy-2,3,4,5-tetrahydrodipicolinate + H2O + H(+). The protein operates within amino-acid biosynthesis; L-lysine biosynthesis via DAP pathway; (S)-tetrahydrodipicolinate from L-aspartate: step 3/4. Functionally, catalyzes the condensation of (S)-aspartate-beta-semialdehyde [(S)-ASA] and pyruvate to 4-hydroxy-tetrahydrodipicolinate (HTPA). The protein is 4-hydroxy-tetrahydrodipicolinate synthase of Synechococcus sp. (strain JA-2-3B'a(2-13)) (Cyanobacteria bacterium Yellowstone B-Prime).